A 141-amino-acid polypeptide reads, in one-letter code: Large ribosomal subunit protein uL11 (141 aa).

This sequence belongs to the universal ribosomal protein uL11 family. As to quaternary structure, part of the ribosomal stalk of the 50S ribosomal subunit. Interacts with L10 and the large rRNA to form the base of the stalk. L10 forms an elongated spine to which L12 dimers bind in a sequential fashion forming a multimeric L10(L12)X complex. Post-translationally, one or more lysine residues are methylated.

Forms part of the ribosomal stalk which helps the ribosome interact with GTP-bound translation factors. The sequence is that of Large ribosomal subunit protein uL11 from Chlorobaculum parvum (strain DSM 263 / NCIMB 8327) (Chlorobium vibrioforme subsp. thiosulfatophilum).